The following is a 264-amino-acid chain: Hydroxyethylthiazole kinase (264 aa).

Residue Met-41 participates in substrate binding. Lys-117 and Ser-163 together coordinate ATP. Gly-190 is a substrate binding site.

This sequence belongs to the Thz kinase family. Requires Mg(2+) as cofactor.

The catalysed reaction is 5-(2-hydroxyethyl)-4-methylthiazole + ATP = 4-methyl-5-(2-phosphooxyethyl)-thiazole + ADP + H(+). The protein operates within cofactor biosynthesis; thiamine diphosphate biosynthesis; 4-methyl-5-(2-phosphoethyl)-thiazole from 5-(2-hydroxyethyl)-4-methylthiazole: step 1/1. Its function is as follows. Catalyzes the phosphorylation of the hydroxyl group of 4-methyl-5-beta-hydroxyethylthiazole (THZ). The chain is Hydroxyethylthiazole kinase from Thermoanaerobacter pseudethanolicus (strain ATCC 33223 / 39E) (Clostridium thermohydrosulfuricum).